Consider the following 303-residue polypeptide: Hemolysin C (303 aa).

CBS domains follow at residues 81-143 (MVPR…NSPL) and 146-203 (LIRK…IDDE).

This sequence belongs to the UPF0053 family. Hemolysin C subfamily.

This Rickettsia prowazekii (strain Madrid E) protein is Hemolysin C (tlyC).